The chain runs to 61 residues: Large ribosomal subunit protein bL28 (61 aa).

The protein belongs to the bacterial ribosomal protein bL28 family.

In Lacticaseibacillus paracasei (strain ATCC 334 / BCRC 17002 / CCUG 31169 / CIP 107868 / KCTC 3260 / NRRL B-441) (Lactobacillus paracasei), this protein is Large ribosomal subunit protein bL28.